Consider the following 399-residue polypeptide: Phosphoglycerate kinase (399 aa).

Substrate-binding positions include 24–26, R41, 64–67, R123, and R160; these read DLN and HLGR. ATP-binding positions include K210, G298, E329, and 355-358; that span reads GGDS.

The protein belongs to the phosphoglycerate kinase family. As to quaternary structure, monomer.

The protein localises to the cytoplasm. The enzyme catalyses (2R)-3-phosphoglycerate + ATP = (2R)-3-phospho-glyceroyl phosphate + ADP. Its pathway is carbohydrate degradation; glycolysis; pyruvate from D-glyceraldehyde 3-phosphate: step 2/5. The chain is Phosphoglycerate kinase from Salinispora tropica (strain ATCC BAA-916 / DSM 44818 / JCM 13857 / NBRC 105044 / CNB-440).